The chain runs to 307 residues: Mitochondrial brown fat uncoupling protein 1 (307 aa).

At 1-10 the chain is on the mitochondrial intermembrane side; that stretch reads MVSLTTSEVH. Residues 11-32 form a helical membrane-spanning segment; the sequence is PTMGVKTFSAGISACLADIITF. 3 Solcar repeats span residues 11-102, 111-201, and 210-295; these read PTMG…VQEY, PTLG…MKGA, and DDVP…LKKE. The Mitochondrial matrix segment spans residues 33–73; that stretch reads PLDTAKVRLQIQGEGQTSSTIRYKGVLGTITTLAKTEGWPK. Residue K56 participates in fatty acid 16:0 binding. Residues 74–96 form a helical membrane-spanning segment; that stretch reads LYSGLPAGIQRQISFASLRIGLY. Topologically, residues 97–116 are mitochondrial intermembrane; it reads DTVQEYFSSGKETPPTLGNR. Residues 117–133 traverse the membrane as a helical segment; it reads ISAGLMTGGVAVFIGQP. Topologically, residues 134–178 are mitochondrial matrix; that stretch reads TEVVKVRLQAQSHLHGIKPRYTGTYNAYRIIATTESFSTLWKGTT. The helical transmembrane segment at 179–195 threads the bilayer; sequence PNLMRNVIINRTELVTY. The Mitochondrial intermembrane portion of the chain corresponds to 196–212; it reads DLMKGALVNNQILADDV. A helical transmembrane segment spans residues 213–232; it reads PCHLLSALVAGFCTTFLASP. At 233 to 266 the chain is on the mitochondrial matrix side; sequence ADVVKTRFINSLPGQYPSVPSCAMTMLTKEGPTA. C254 is subject to Cysteine sulfenic acid (-SOH). A helical membrane pass occupies residues 267-289; that stretch reads FFKGFVPSFLRLASWNVIMFVCF. Fatty acid 16:0 is bound at residue K269. Over 290–307 the chain is Mitochondrial intermembrane; the sequence is EQLKKELMKSRQTMDCTT.

The protein belongs to the mitochondrial carrier (TC 2.A.29) family. Most probably functions as a monomer. Binds one purine nucleotide per monomer. However, has also been suggested to function as a homodimer or a homotetramer. Tightly associates with cardiolipin in the mitochondrion inner membrane; may stabilize and regulate its activity. Post-translationally, may undergo sulfenylation upon cold exposure. May increase the sensitivity of UCP1 thermogenic function to the activation by noradrenaline probably through structural effects. In terms of processing, may undergo ubiquitin-mediated proteasomal degradation.

The protein resides in the mitochondrion inner membrane. It catalyses the reaction H(+)(in) = H(+)(out). Its activity is regulated as follows. Has no constitutive proton transporter activity and has to be activated by long-chain fatty acids/LCFAs. Inhibited by purine nucleotides. Both purine nucleotides and LCFAs bind the cytosolic side of the transporter and directly compete to activate or inhibit it. Activated by noradrenaline and reactive oxygen species. Despite lacking canonical translational encoding for selenocysteine, a small pool of the protein has been observed to selectively incorporate selenocysteine at 'Cys-254'. Selenocysteine-modified protein is highly sensitive to redox modification and may constitute a pool of protein highly sensitive to activation by elevated levels of reactive oxygen species (ROS). Mitochondrial protein responsible for thermogenic respiration, a specialized capacity of brown adipose tissue and beige fat that participates in non-shivering adaptive thermogenesis to temperature and diet variations and more generally to the regulation of energy balance. Functions as a long-chain fatty acid/LCFA and proton symporter, simultaneously transporting one LCFA and one proton through the inner mitochondrial membrane. However, LCFAs remaining associated with the transporter via their hydrophobic tails, it results in an apparent transport of protons activated by LCFAs. Thereby, dissipates the mitochondrial proton gradient and converts the energy of substrate oxydation into heat instead of ATP. Regulates the production of reactive oxygen species/ROS by mitochondria. This chain is Mitochondrial brown fat uncoupling protein 1, found in Dicrostonyx groenlandicus (Northern collared lemming).